The following is a 504-amino-acid chain: MTIYNINLGIGWASSGVEYAQAYRAQILRSLGMPAKFIFTNMFQSENLEHFTKNIGFEDNEIIWLYGYFTDVKISGTTYKKDDLEATFSQCPTKKEASSDRKLIRYYFENQELYINASLYGENQEYVQRVEYVVKGKLIRKDYYSYTKVFSEFYSPGENGVQLCNRSFYNEDGSIAYEEILSNEKSTFVFSNKICYGLEELLEFMLEDLSLTKSDLILLDRATGIGQVVFENIGAAKLAVVIHAEHFNEKNTDEHNILWNNYYEYQFTNADKVNAFITSTERQKILLEEQFTQYTSLHPKIVAIPVGSLDQLKFPEQSRKSFSMMTGSRLAIEKHIDWLIEGVALAQKRLPELTFDIYGEGGERRKLTELLTKLHAGEFIELKGHKQLDEIYQNYELYLTASTSEGFGLTLMEAVGSGLPIIGFDVPYGNQTFVCSGENGLLIERPKGDDRSRIVQAFADSIYEYFTKFKMADAQQYSYNIAENYKHEKLVERWKDFIEEMLND.

Position 16 to 19 (16 to 19) interacts with UDP; it reads GVEY. His-243 is an N-acetyl-D-glucosamine binding site. UDP is bound at residue 385–386; the sequence is HK. 405–408 contacts N-acetyl-D-glucosamine; that stretch reads EGFG.

It belongs to the glycosyltransferase group 1 family. Glycosyltransferase 4 subfamily. As to quaternary structure, interacts with stabilizing protein GtfB (Gtf1), probably via the N-terminus of this protein; probably forms a heterotetramer with 2 subunits each of GtfA and GtfB. Part of the accessory SecA2/SecY2 protein translocation apparatus.

Its subcellular location is the cytoplasm. It localises to the cell membrane. The enzyme catalyses L-seryl-[protein] + UDP-N-acetyl-alpha-D-glucosamine = 3-O-[N-acetyl-alpha-D-glucosaminyl]-L-seryl-[protein] + UDP + H(+). Its pathway is protein modification; protein glycosylation. Required for polymorphic O-glycosylation of serine-rich repeat protein Fap1. Catalyzes the first step in glycosylation by transferring N-acetylglucosamine from UDP-GlcNAc to serine residues in Fap1. Part of the accessory SecA2/SecY2 system specifically required to export Fap1, a serine-rich fimbrial adhesin encoded upstream in the same operon. The GtfA-GtfB (Gtf1-Gtf2 in this bacteria) complex adds GlcNAc from UDP-GlcNAc to Fap1, attaching the first sugar residue. Cannot use not UDP-Glc as substrate. This subunit has very low glycosyltransferase activity; the GtfB stabilizing protein enhances membrane association, protease resistance and glycosyltransferase activity. The polypeptide is UDP-N-acetylglucosamine--peptide N-acetylglucosaminyltransferase GtfA subunit (Streptococcus parasanguinis).